We begin with the raw amino-acid sequence, 510 residues long: Ectonucleoside triphosphate diphosphohydrolase 1 (510 aa).

Residues 1–16 (MEDIKDSKVKRFCSKN) are Cytoplasmic-facing. Residues 17–37 (ILIILGFTSILAVIALIAVGL) traverse the membrane as a helical segment. At 38 to 478 (TQNKPLPENV…SPPLPHSTYI (441 aa)) the chain is on the extracellular side. The N-linked (GlcNAc...) asparagine glycan is linked to asparagine 73. The cysteines at positions 84 and 108 are disulfide-linked. Glutamate 174 (proton acceptor) is an active-site residue. 3 N-linked (GlcNAc...) asparagine glycosylation sites follow: asparagine 226, asparagine 291, and asparagine 333. 2 cysteine pairs are disulfide-bonded: cysteine 254–cysteine 300 and cysteine 281–cysteine 324. Disulfide bonds link cysteine 337–cysteine 342 and cysteine 391–cysteine 414. N-linked (GlcNAc...) asparagine glycans are attached at residues asparagine 428 and asparagine 457. A helical membrane pass occupies residues 479–499 (GLMVLFSLLLVAVAITGLFIY). Over 500–510 (SKPSYFWKEAV) the chain is Cytoplasmic.

It belongs to the GDA1/CD39 NTPase family. Homodimer; disulfide-linked. Ca(2+) serves as cofactor. The cofactor is Mg(2+). N-glycosylated. In terms of processing, the N-terminus is blocked. Post-translationally, palmitoylated on Cys-13; which is required for caveola targeting.

The protein localises to the membrane. Its subcellular location is the caveola. The catalysed reaction is a ribonucleoside 5'-triphosphate + 2 H2O = a ribonucleoside 5'-phosphate + 2 phosphate + 2 H(+). It carries out the reaction a ribonucleoside 5'-triphosphate + H2O = a ribonucleoside 5'-diphosphate + phosphate + H(+). The enzyme catalyses a ribonucleoside 5'-diphosphate + H2O = a ribonucleoside 5'-phosphate + phosphate + H(+). It catalyses the reaction ATP + 2 H2O = AMP + 2 phosphate + 2 H(+). The catalysed reaction is ATP + H2O = ADP + phosphate + H(+). It carries out the reaction ADP + H2O = AMP + phosphate + H(+). The enzyme catalyses CTP + 2 H2O = CMP + 2 phosphate + 2 H(+). It catalyses the reaction CTP + H2O = CDP + phosphate + H(+). The catalysed reaction is CDP + H2O = CMP + phosphate + H(+). It carries out the reaction GTP + 2 H2O = GMP + 2 phosphate + 2 H(+). The enzyme catalyses GTP + H2O = GDP + phosphate + H(+). It catalyses the reaction GDP + H2O = GMP + phosphate + H(+). The catalysed reaction is ITP + 2 H2O = IMP + 2 phosphate + 2 H(+). It carries out the reaction ITP + H2O = IDP + phosphate + H(+). The enzyme catalyses IDP + H2O = IMP + phosphate + H(+). It catalyses the reaction UTP + 2 H2O = UMP + 2 phosphate + 2 H(+). The catalysed reaction is UTP + H2O = UDP + phosphate + H(+). It carries out the reaction UDP + H2O = UMP + phosphate + H(+). Functionally, catalyzes the hydrolysis of both di- and triphosphate nucleotides (NDPs and NTPs) and hydrolyze NTPs to nucleotide monophosphates (NMPs) in two distinct successive phosphate-releasing steps, with NDPs as intermediates and participates in the regulation of extracellular levels of nucleotides. By hydrolyzing proinflammatory ATP and platelet-activating ADP to AMP, it blocks platelet aggregation and supports blood flow. This is Ectonucleoside triphosphate diphosphohydrolase 1 from Mus musculus (Mouse).